We begin with the raw amino-acid sequence, 79 residues long: uncharacterized protein (79 aa).

The protein resides in the mitochondrion. This is an uncharacterized protein from Marchantia polymorpha (Common liverwort).